The primary structure comprises 388 residues: Succinyl-diaminopimelate desuccinylase (388 aa).

Histidine 84 contributes to the Zn(2+) binding site. The active site involves aspartate 86. Residue aspartate 115 participates in Zn(2+) binding. The active-site Proton acceptor is glutamate 146. Residues glutamate 147, glutamate 175, and histidine 360 each contribute to the Zn(2+) site.

This sequence belongs to the peptidase M20A family. DapE subfamily. Homodimer. Requires Zn(2+) as cofactor. The cofactor is Co(2+).

The catalysed reaction is N-succinyl-(2S,6S)-2,6-diaminopimelate + H2O = (2S,6S)-2,6-diaminopimelate + succinate. It functions in the pathway amino-acid biosynthesis; L-lysine biosynthesis via DAP pathway; LL-2,6-diaminopimelate from (S)-tetrahydrodipicolinate (succinylase route): step 3/3. Its function is as follows. Catalyzes the hydrolysis of N-succinyl-L,L-diaminopimelic acid (SDAP), forming succinate and LL-2,6-diaminopimelate (DAP), an intermediate involved in the bacterial biosynthesis of lysine and meso-diaminopimelic acid, an essential component of bacterial cell walls. This chain is Succinyl-diaminopimelate desuccinylase, found in Helicobacter pylori (strain G27).